Consider the following 301-residue polypeptide: Ethylmalonyl-CoA decarboxylase (301 aa).

Position 211 is an N6-acetyllysine; alternate (lysine 211). Lysine 211 carries the N6-succinyllysine; alternate modification. The residue at position 295 (lysine 295) is an N6-succinyllysine.

The protein belongs to the enoyl-CoA hydratase/isomerase family.

Its subcellular location is the cytoplasm. It localises to the cytosol. It carries out the reaction (2S)-ethylmalonyl-CoA + H(+) = butanoyl-CoA + CO2. The catalysed reaction is (S)-methylmalonyl-CoA + H(+) = propanoyl-CoA + CO2. The enzyme catalyses (2R)-ethylmalonyl-CoA + H(+) = butanoyl-CoA + CO2. In terms of biological role, decarboxylates ethylmalonyl-CoA, a potentially toxic metabolite, to form butyryl-CoA, suggesting it might be involved in metabolite proofreading. Acts preferentially on (S)-ethylmalonyl-CoA but also has some activity on the (R)-isomer. Also has methylmalonyl-CoA decarboxylase activity at lower level. The polypeptide is Ethylmalonyl-CoA decarboxylase (ECHDC1) (Pongo abelii (Sumatran orangutan)).